Here is a 574-residue protein sequence, read N- to C-terminus: Golgin subfamily A member 6-like protein 4 (574 aa).

Residues 1–11 show a composition bias toward pro residues; sequence MWPQPRFPPHP. Disordered stretches follow at residues 1 to 77 and 491 to 552; these read MWPQ…YGEG and KELK…AAGG. Positions 51-62 are enriched in polar residues; it reads NGSSPDTATSGG. Residues 157-496 are a coiled coil; the sequence is SKVEQLQDET…EQQVKELKKS (340 aa). Residues 491–504 are compositionally biased toward basic and acidic residues; that stretch reads KELKKSGGAEEPRG. Positions 508–523 are enriched in low complexity; sequence AAAARPVAGAPVPQGA.

The protein belongs to the GOLGA6 family.

This Homo sapiens (Human) protein is Golgin subfamily A member 6-like protein 4 (GOLGA6L4).